Consider the following 130-residue polypeptide: Small ribosomal subunit protein uS9 (130 aa).

It belongs to the universal ribosomal protein uS9 family.

The protein is Small ribosomal subunit protein uS9 of Polaromonas naphthalenivorans (strain CJ2).